A 290-amino-acid polypeptide reads, in one-letter code: Non-homologous end joining protein Ku (290 aa).

The 173-residue stretch at Thr-11 to Lys-183 folds into the Ku domain. Residues Met-253–Ala-290 are disordered. The span at Lys-254–Ser-269 shows a compositional bias: basic and acidic residues.

This sequence belongs to the prokaryotic Ku family. In terms of assembly, homodimer. Interacts with LigD.

With LigD forms a non-homologous end joining (NHEJ) DNA repair enzyme, which repairs dsDNA breaks with reduced fidelity. Binds linear dsDNA with 5'- and 3'- overhangs but not closed circular dsDNA nor ssDNA. Recruits and stimulates the ligase activity of LigD. In Koribacter versatilis (strain Ellin345), this protein is Non-homologous end joining protein Ku.